A 186-amino-acid chain; its full sequence is Ribosome-recycling factor (186 aa).

The protein belongs to the RRF family.

Its subcellular location is the cytoplasm. Functionally, responsible for the release of ribosomes from messenger RNA at the termination of protein biosynthesis. May increase the efficiency of translation by recycling ribosomes from one round of translation to another. This Cupriavidus metallidurans (strain ATCC 43123 / DSM 2839 / NBRC 102507 / CH34) (Ralstonia metallidurans) protein is Ribosome-recycling factor.